We begin with the raw amino-acid sequence, 350 residues long: Uroporphyrinogen decarboxylase (350 aa).

Substrate is bound by residues 28–32 (RQAGR), F47, D78, Y155, S210, and H325.

Belongs to the uroporphyrinogen decarboxylase family. Homodimer.

Its subcellular location is the cytoplasm. It carries out the reaction uroporphyrinogen III + 4 H(+) = coproporphyrinogen III + 4 CO2. Its pathway is porphyrin-containing compound metabolism; protoporphyrin-IX biosynthesis; coproporphyrinogen-III from 5-aminolevulinate: step 4/4. In terms of biological role, catalyzes the decarboxylation of four acetate groups of uroporphyrinogen-III to yield coproporphyrinogen-III. This is Uroporphyrinogen decarboxylase from Nostoc sp. (strain PCC 7120 / SAG 25.82 / UTEX 2576).